The chain runs to 131 residues: Small ribosomal subunit protein uS11 (131 aa).

This sequence belongs to the universal ribosomal protein uS11 family. As to quaternary structure, part of the 30S ribosomal subunit. Interacts with proteins S7 and S18. Binds to IF-3.

In terms of biological role, located on the platform of the 30S subunit, it bridges several disparate RNA helices of the 16S rRNA. Forms part of the Shine-Dalgarno cleft in the 70S ribosome. The protein is Small ribosomal subunit protein uS11 of Thermotoga neapolitana (strain ATCC 49049 / DSM 4359 / NBRC 107923 / NS-E).